The primary structure comprises 564 residues: Large neutral amino acids transporter small subunit 3 (564 aa).

Residues 20 to 40 traverse the membrane as a helical segment; sequence VVENLFFSAVLLGWASLLIML. N-linked (GlcNAc...) asparagine glycosylation is found at Asn54 and Asn57. 5 helical membrane-spanning segments follow: residues 78-98, 105-124, 131-151, 165-185, and 191-211; these read LGFT…GILM, PLRL…MALA, LSPL…CLTF, STFM…FPGI, and AGVP…LIFL. Ser262 and Ser267 each carry phosphoserine. Transmembrane regions (helical) follow at residues 303–323 and 357–377; these read IFLW…FYMG and SIFG…GYIM. Asn396 is a glycosylation site (N-linked (GlcNAc...) asparagine). At Ser398 the chain carries Phosphoserine. Helical transmembrane passes span 424 to 444, 451 to 471, 490 to 510, and 515 to 535; these read AINA…ACLI, LLAF…CGGL, LISA…VGPL, and FWVN…PSYL. Residue Asn558 is glycosylated (N-linked (GlcNAc...) asparagine).

It belongs to the SLC43A transporter (TC 2.A.1.44) family. As to expression, expressed in the kidney cortex as well as liver, pancreas, and skeletal muscle. In kidney expressed in the glomerular tuft (at protein level). Expressed in liver, skeletal muscle and pancreas (at protein level).

It localises to the cell membrane. Its subcellular location is the apical cell membrane. It is found in the endoplasmic reticulum membrane. It catalyses the reaction D-leucine(in) = D-leucine(out). It carries out the reaction L-leucine(in) = L-leucine(out). The catalysed reaction is L-isoleucine(in) = L-isoleucine(out). The enzyme catalyses L-methionine(in) = L-methionine(out). It catalyses the reaction L-phenylalanine(in) = L-phenylalanine(out). It carries out the reaction L-valine(in) = L-valine(out). In terms of biological role, uniport that mediates the transport of neutral amino acids such as L-leucine, L-isoleucine, L-valine, and L-phenylalanine. The transport activity is sodium ions-independent, electroneutral and mediated by a facilitated diffusion. The sequence is that of Large neutral amino acids transporter small subunit 3 from Mus musculus (Mouse).